A 369-amino-acid chain; its full sequence is Transcription initiation factor IIA large subunit (369 aa).

Polar residues-rich tracts occupy residues 113–210 (HGNS…QNSP) and 218–233 (TESS…NDVP). Residues 113 to 248 (HGNSNYYSPP…IHDLDDAGSP (136 aa)) are disordered. Ser-249 carries the phosphoserine modification. A disordered region spans residues 282 to 319 (IEDNEDEKKPPVDTPSDEAINSDLDDPDSDEAPETEEG). Over residues 304 to 319 (DLDDPDSDEAPETEEG) the composition is skewed to acidic residues.

Belongs to the TFIIA subunit 1 family. TFIIA is a heterodimer of the large subunit and the small subunit gamma.

The protein localises to the nucleus. Its function is as follows. TFIIA is a component of the transcription machinery of RNA polymerase II and plays an important role in transcriptional activation. TFIIA in a complex with tbp mediates transcriptional activity. This Schizosaccharomyces pombe (strain 972 / ATCC 24843) (Fission yeast) protein is Transcription initiation factor IIA large subunit.